Here is a 158-residue protein sequence, read N- to C-terminus: SsrA-binding protein (158 aa).

A disordered region spans residues 131-158 (GKKTHDKRETEKKRDWNREKARLLRDRG). Over residues 136–158 (DKRETEKKRDWNREKARLLRDRG) the composition is skewed to basic and acidic residues.

It belongs to the SmpB family.

The protein localises to the cytoplasm. Required for rescue of stalled ribosomes mediated by trans-translation. Binds to transfer-messenger RNA (tmRNA), required for stable association of tmRNA with ribosomes. tmRNA and SmpB together mimic tRNA shape, replacing the anticodon stem-loop with SmpB. tmRNA is encoded by the ssrA gene; the 2 termini fold to resemble tRNA(Ala) and it encodes a 'tag peptide', a short internal open reading frame. During trans-translation Ala-aminoacylated tmRNA acts like a tRNA, entering the A-site of stalled ribosomes, displacing the stalled mRNA. The ribosome then switches to translate the ORF on the tmRNA; the nascent peptide is terminated with the 'tag peptide' encoded by the tmRNA and targeted for degradation. The ribosome is freed to recommence translation, which seems to be the essential function of trans-translation. This is SsrA-binding protein from Brucella ovis (strain ATCC 25840 / 63/290 / NCTC 10512).